We begin with the raw amino-acid sequence, 427 residues long: Glutamate-1-semialdehyde 2,1-aminomutase (427 aa).

The residue at position 267 (Lys-267) is an N6-(pyridoxal phosphate)lysine.

It belongs to the class-III pyridoxal-phosphate-dependent aminotransferase family. HemL subfamily. Homodimer. Requires pyridoxal 5'-phosphate as cofactor.

It is found in the cytoplasm. The enzyme catalyses (S)-4-amino-5-oxopentanoate = 5-aminolevulinate. Its pathway is porphyrin-containing compound metabolism; protoporphyrin-IX biosynthesis; 5-aminolevulinate from L-glutamyl-tRNA(Glu): step 2/2. In Thermodesulfovibrio yellowstonii (strain ATCC 51303 / DSM 11347 / YP87), this protein is Glutamate-1-semialdehyde 2,1-aminomutase.